Consider the following 535-residue polypeptide: Dimethylaniline monooxygenase [N-oxide-forming] 2 (535 aa).

Ala-2 is modified (N-acetylalanine). Residues 9–13 (GAGVS), Glu-32, 40–41 (LW), and 61–62 (NT) each bind FAD. NADP(+) is bound by residues 60–61 (TN) and 195–198 (SAAD). Residue Lys-492 forms a Glycyl lysine isopeptide (Lys-Gly) (interchain with G-Cter in SUMO) linkage. The helical transmembrane segment at 510 to 530 (APVSFLLKILGLLAVVLAFFF) threads the bilayer.

This sequence belongs to the FMO family. FAD is required as a cofactor. It depends on Mg(2+) as a cofactor.

Its subcellular location is the microsome membrane. It localises to the endoplasmic reticulum membrane. Functionally, catalyzes the oxidative metabolism of numerous xenobiotics, including mainly therapeutic drugs and insecticides that contain a soft nucleophile, most commonly nitrogen and sulfur and participates to their bioactivation. Catalyzes the S-oxygenation of the prodrug ethionamide (ETA) to the S-oxide (ETASO), the first step in its bioactivation following by the second oxygenation to the sulfinic acid but to a lesser extend. The chain is Dimethylaniline monooxygenase [N-oxide-forming] 2 from Mus musculus (Mouse).